Reading from the N-terminus, the 197-residue chain is NADH-quinone oxidoreductase subunit C (197 aa).

This sequence belongs to the complex I 30 kDa subunit family. In terms of assembly, NDH-1 is composed of 14 different subunits. Subunits NuoB, C, D, E, F, and G constitute the peripheral sector of the complex.

The protein localises to the cell inner membrane. The catalysed reaction is a quinone + NADH + 5 H(+)(in) = a quinol + NAD(+) + 4 H(+)(out). In terms of biological role, NDH-1 shuttles electrons from NADH, via FMN and iron-sulfur (Fe-S) centers, to quinones in the respiratory chain. The immediate electron acceptor for the enzyme in this species is believed to be ubiquinone. Couples the redox reaction to proton translocation (for every two electrons transferred, four hydrogen ions are translocated across the cytoplasmic membrane), and thus conserves the redox energy in a proton gradient. The chain is NADH-quinone oxidoreductase subunit C from Methylobacillus flagellatus (strain ATCC 51484 / DSM 6875 / VKM B-1610 / KT).